The chain runs to 533 residues: WUSCHEL-related homeobox 7 (533 aa).

Disordered regions lie at residues 1-74 (MASS…NPRP) and 125-212 (SKNK…STQA). Residues 28–41 (AGSPPSLLSGSSAG) show a composition bias toward low complexity. The segment covering 59–68 (GEERVPDPKP) has biased composition (basic and acidic residues). Residues 65–129 (DPKPRWNPRP…NRKSRSKNKL (65 aa)) constitute a DNA-binding region (homeobox; WUS-type). Residues 132 to 143 (GGTGRAGLGLGG) are compositionally biased toward gly residues. The segment covering 161-174 (FTPPPPILPAPQPV) has biased composition (pro residues). Positions 175 to 202 (QPQQQLVSPVAAPTSSSSSSSDRSSGSS) are enriched in low complexity.

It belongs to the WUS homeobox family.

Its subcellular location is the nucleus. In terms of biological role, transcription factor which may be involved in developmental processes. The polypeptide is WUSCHEL-related homeobox 7 (WOX7) (Oryza sativa subsp. japonica (Rice)).